The sequence spans 1030 residues: uncharacterized protein (1030 aa).

The SWIM-type zinc-finger motif lies at 51–86 (IKVSFTAKDGELTCKCSCLANVDNCVHIVAVLLKYH). Positions 590-751 (RGLEENKFGG…WSCFDFVLPS (162 aa)) constitute a Helicase ATP-binding domain. 603 to 610 (DEMGLGKT) contacts ATP. The short motif at 702–705 (DEAQ) is the DEAQ box element. Residues 867-1021 (ALEIIHEAIE…EDVNFFESLT (155 aa)) form the Helicase C-terminal domain.

The protein belongs to the SNF2/RAD54 helicase family.

This is an uncharacterized protein from Mycoplasma pneumoniae (strain ATCC 29342 / M129 / Subtype 1) (Mycoplasmoides pneumoniae).